Reading from the N-terminus, the 37-residue chain is Potassium channel toxin alpha-KTx 1.3 (37 aa).

Glutamine 1 bears the Pyrrolidone carboxylic acid mark. 3 cysteine pairs are disulfide-bonded: cysteine 7/cysteine 28, cysteine 13/cysteine 33, and cysteine 17/cysteine 35. Residues 26–33 form an interaction with Ca(2+)-activated K(+) channels region; it reads GKCMGKKC.

This sequence belongs to the short scorpion toxin superfamily. Potassium channel inhibitor family. Alpha-KTx 01 subfamily. Expressed by the venom gland.

Its subcellular location is the secreted. Blocks selectively the high conductance calcium-activated (maxi-K) potassium channels (KCa1.1/KCNMA1). The sequence is that of Potassium channel toxin alpha-KTx 1.3 from Hottentotta tamulus (Eastern Indian scorpion).